The chain runs to 187 residues: Small ribosomal subunit protein uS5 (187 aa).

The interval 1–20 (MAERENRRDRRDDRSREETP) is disordered. An S5 DRBM domain is found at 22 to 85 (FADRLVAINR…EQAKRQMIRV (64 aa)).

It belongs to the universal ribosomal protein uS5 family. As to quaternary structure, part of the 30S ribosomal subunit. Contacts proteins S4 and S8.

Functionally, with S4 and S12 plays an important role in translational accuracy. Located at the back of the 30S subunit body where it stabilizes the conformation of the head with respect to the body. This chain is Small ribosomal subunit protein uS5, found in Cereibacter sphaeroides (strain ATCC 17029 / ATH 2.4.9) (Rhodobacter sphaeroides).